The following is a 110-amino-acid chain: Iron-sulfur cluster assembly protein CyaY (110 aa).

The protein belongs to the frataxin family.

Involved in iron-sulfur (Fe-S) cluster assembly. May act as a regulator of Fe-S biogenesis. The chain is Iron-sulfur cluster assembly protein CyaY from Pseudomonas syringae pv. tomato (strain ATCC BAA-871 / DC3000).